The sequence spans 181 residues: MGRYAREPDNAGKSCKARGSNLRVHFKNTCETANAIRKMPLKRAVAYLKNVTAQKECVPFRRFNGGVGRCAQAKQFGTTQGRWPKKSAEFLLQLLRNAESNADYSGLDVDRLVVQHIQVNRAACLRRRTYRAHGRINPYMSSPCHIELWLTEAESVPEAAKKPGKKTSAVEKSKKATAATH.

A disordered region spans residues 157-181 (PEAAKKPGKKTSAVEKSKKATAATH).

Belongs to the universal ribosomal protein uL22 family.

In Biphyllus lunatus (Beetle), this protein is Large ribosomal subunit protein uL22 (RpL17).